Here is a 286-residue protein sequence, read N- to C-terminus: 4-hydroxy-3-methylbut-2-enyl diphosphate reductase (286 aa).

A [4Fe-4S] cluster-binding site is contributed by cysteine 12. Residues histidine 47 and histidine 80 each contribute to the (2E)-4-hydroxy-3-methylbut-2-enyl diphosphate site. Dimethylallyl diphosphate-binding residues include histidine 47 and histidine 80. Positions 47 and 80 each coordinate isopentenyl diphosphate. Residue cysteine 102 participates in [4Fe-4S] cluster binding. (2E)-4-hydroxy-3-methylbut-2-enyl diphosphate is bound at residue histidine 130. Position 130 (histidine 130) interacts with dimethylallyl diphosphate. An isopentenyl diphosphate-binding site is contributed by histidine 130. The active-site Proton donor is the glutamate 132. Threonine 170 lines the (2E)-4-hydroxy-3-methylbut-2-enyl diphosphate pocket. Residue cysteine 198 participates in [4Fe-4S] cluster binding. Serine 226, asparagine 228, and serine 270 together coordinate (2E)-4-hydroxy-3-methylbut-2-enyl diphosphate. Serine 226, asparagine 228, and serine 270 together coordinate dimethylallyl diphosphate. Positions 226, 228, and 270 each coordinate isopentenyl diphosphate.

It belongs to the IspH family. The cofactor is [4Fe-4S] cluster.

It carries out the reaction isopentenyl diphosphate + 2 oxidized [2Fe-2S]-[ferredoxin] + H2O = (2E)-4-hydroxy-3-methylbut-2-enyl diphosphate + 2 reduced [2Fe-2S]-[ferredoxin] + 2 H(+). It catalyses the reaction dimethylallyl diphosphate + 2 oxidized [2Fe-2S]-[ferredoxin] + H2O = (2E)-4-hydroxy-3-methylbut-2-enyl diphosphate + 2 reduced [2Fe-2S]-[ferredoxin] + 2 H(+). Its pathway is isoprenoid biosynthesis; dimethylallyl diphosphate biosynthesis; dimethylallyl diphosphate from (2E)-4-hydroxy-3-methylbutenyl diphosphate: step 1/1. It functions in the pathway isoprenoid biosynthesis; isopentenyl diphosphate biosynthesis via DXP pathway; isopentenyl diphosphate from 1-deoxy-D-xylulose 5-phosphate: step 6/6. Catalyzes the conversion of 1-hydroxy-2-methyl-2-(E)-butenyl 4-diphosphate (HMBPP) into a mixture of isopentenyl diphosphate (IPP) and dimethylallyl diphosphate (DMAPP). Acts in the terminal step of the DOXP/MEP pathway for isoprenoid precursor biosynthesis. This is 4-hydroxy-3-methylbut-2-enyl diphosphate reductase from Desulfovibrio desulfuricans (strain ATCC 27774 / DSM 6949 / MB).